We begin with the raw amino-acid sequence, 417 residues long: Queuine tRNA-ribosyltransferase accessory subunit 2 (417 aa).

The Zn(2+) site is built by Cys-324, Cys-326, Cys-329, and His-355.

This sequence belongs to the queuine tRNA-ribosyltransferase family. QTRT2 subfamily. As to quaternary structure, heterodimer of a catalytic subunit and an accessory subunit. The cofactor is Zn(2+).

Its subcellular location is the cytoplasm. Functionally, non-catalytic subunit of the queuine tRNA-ribosyltransferase (TGT) that catalyzes the base-exchange of a guanine (G) residue with queuine (Q) at position 34 (anticodon wobble position) in tRNAs with GU(N) anticodons (tRNA-Asp, -Asn, -His and -Tyr), resulting in the hypermodified nucleoside queuosine (7-(((4,5-cis-dihydroxy-2-cyclopenten-1-yl)amino)methyl)-7-deazaguanosine). The protein is Queuine tRNA-ribosyltransferase accessory subunit 2 of Drosophila persimilis (Fruit fly).